We begin with the raw amino-acid sequence, 217 residues long: Probable transaldolase (217 aa).

Lys83 serves as the catalytic Schiff-base intermediate with substrate.

This sequence belongs to the transaldolase family. Type 3B subfamily.

Its subcellular location is the cytoplasm. It catalyses the reaction D-sedoheptulose 7-phosphate + D-glyceraldehyde 3-phosphate = D-erythrose 4-phosphate + beta-D-fructose 6-phosphate. Its pathway is carbohydrate degradation; pentose phosphate pathway; D-glyceraldehyde 3-phosphate and beta-D-fructose 6-phosphate from D-ribose 5-phosphate and D-xylulose 5-phosphate (non-oxidative stage): step 2/3. Functionally, transaldolase is important for the balance of metabolites in the pentose-phosphate pathway. The polypeptide is Probable transaldolase (Brucella abortus (strain S19)).